The following is a 657-amino-acid chain: Glycogen debranching enzyme (657 aa).

Catalysis depends on Asp-336, which acts as the Nucleophile. The active-site Proton donor is the Glu-371. The tract at residues 460–479 (ANGEENRDGTNNNYSNNHGK) is disordered.

This sequence belongs to the glycosyl hydrolase 13 family.

It carries out the reaction Hydrolysis of (1-&gt;6)-alpha-D-glucosidic linkages to branches with degrees of polymerization of three or four glucose residues in limit dextrin.. It functions in the pathway glycan degradation; glycogen degradation. Its function is as follows. Removes maltotriose and maltotetraose chains that are attached by 1,6-alpha-linkage to the limit dextrin main chain, generating a debranched limit dextrin. The polypeptide is Glycogen debranching enzyme (Shigella dysenteriae serotype 1 (strain Sd197)).